The following is a 213-amino-acid chain: Adenylate kinase (213 aa).

10–15 (GSGKGT) provides a ligand contact to ATP. The NMP stretch occupies residues 30–59 (SVGDLLRNIISSSSELGKKIKGTVESGNLI). AMP is bound by residues arginine 36, 57-59 (NLI), 83-86 (GFPR), and glutamine 90. Residues 125–160 (NRLACLDCKSIYSVSSFKSTTCAKCKSTRLEKRIDD) form an LID region. Arginine 126 contacts ATP. Zn(2+) contacts are provided by cysteine 129 and cysteine 132. Position 135–136 (135–136 (IY)) interacts with ATP. Cysteine 146 and cysteine 149 together coordinate Zn(2+). Residues arginine 157 and arginine 169 each contribute to the AMP site. Leucine 195 lines the ATP pocket.

This sequence belongs to the adenylate kinase family. In terms of assembly, monomer.

The protein resides in the cytoplasm. The enzyme catalyses AMP + ATP = 2 ADP. It functions in the pathway purine metabolism; AMP biosynthesis via salvage pathway; AMP from ADP: step 1/1. Functionally, catalyzes the reversible transfer of the terminal phosphate group between ATP and AMP. Plays an important role in cellular energy homeostasis and in adenine nucleotide metabolism. The protein is Adenylate kinase of Wolbachia sp. subsp. Drosophila simulans (strain wRi).